The primary structure comprises 137 residues: ATP synthase epsilon chain (137 aa).

It belongs to the ATPase epsilon chain family. In terms of assembly, F-type ATPases have 2 components, CF(1) - the catalytic core - and CF(0) - the membrane proton channel. CF(1) has five subunits: alpha(3), beta(3), gamma(1), delta(1), epsilon(1). CF(0) has three main subunits: a, b and c.

It is found in the cellular thylakoid membrane. In terms of biological role, produces ATP from ADP in the presence of a proton gradient across the membrane. This chain is ATP synthase epsilon chain (atpC), found in Nostoc sp. (strain PCC 7120 / SAG 25.82 / UTEX 2576).